The sequence spans 295 residues: Cyclin-G1 (295 aa).

It belongs to the cyclin family. Cyclin G subfamily.

It is found in the nucleus. Functionally, may play a role in growth regulation. Is associated with G2/M phase arrest in response to DNA damage. May be an intermediate by which p53 mediates its role as an inhibitor of cellular proliferation. The protein is Cyclin-G1 (CCNG1) of Sus scrofa (Pig).